A 304-amino-acid polypeptide reads, in one-letter code: Acetyl-coenzyme A carboxylase carboxyl transferase subunit beta (304 aa).

The CoA carboxyltransferase N-terminal domain occupies 25-294 (LWIKCPETGE…KAIKRDTATE (270 aa)).

The protein belongs to the AccD/PCCB family. As to quaternary structure, acetyl-CoA carboxylase is a heterohexamer composed of biotin carboxyl carrier protein (AccB), biotin carboxylase (AccC) and two subunits each of ACCase subunit alpha (AccA) and ACCase subunit beta (AccD).

The protein localises to the cytoplasm. It catalyses the reaction N(6)-carboxybiotinyl-L-lysyl-[protein] + acetyl-CoA = N(6)-biotinyl-L-lysyl-[protein] + malonyl-CoA. It participates in lipid metabolism; malonyl-CoA biosynthesis; malonyl-CoA from acetyl-CoA: step 1/1. Component of the acetyl coenzyme A carboxylase (ACC) complex. Biotin carboxylase (BC) catalyzes the carboxylation of biotin on its carrier protein (BCCP) and then the CO(2) group is transferred by the transcarboxylase to acetyl-CoA to form malonyl-CoA. The chain is Acetyl-coenzyme A carboxylase carboxyl transferase subunit beta from Sinorhizobium medicae (strain WSM419) (Ensifer medicae).